The primary structure comprises 93 residues: Pyrimidine/purine nucleoside phosphorylase (93 aa).

This sequence belongs to the nucleoside phosphorylase PpnP family.

It carries out the reaction a purine D-ribonucleoside + phosphate = a purine nucleobase + alpha-D-ribose 1-phosphate. The enzyme catalyses adenosine + phosphate = alpha-D-ribose 1-phosphate + adenine. It catalyses the reaction cytidine + phosphate = cytosine + alpha-D-ribose 1-phosphate. The catalysed reaction is guanosine + phosphate = alpha-D-ribose 1-phosphate + guanine. It carries out the reaction inosine + phosphate = alpha-D-ribose 1-phosphate + hypoxanthine. The enzyme catalyses thymidine + phosphate = 2-deoxy-alpha-D-ribose 1-phosphate + thymine. It catalyses the reaction uridine + phosphate = alpha-D-ribose 1-phosphate + uracil. The catalysed reaction is xanthosine + phosphate = alpha-D-ribose 1-phosphate + xanthine. Catalyzes the phosphorolysis of diverse nucleosides, yielding D-ribose 1-phosphate and the respective free bases. Can use uridine, adenosine, guanosine, cytidine, thymidine, inosine and xanthosine as substrates. Also catalyzes the reverse reactions. In Photobacterium profundum (strain SS9), this protein is Pyrimidine/purine nucleoside phosphorylase.